Consider the following 352-residue polypeptide: Protein Wnt-2 (352 aa).

An N-terminal signal peptide occupies residues 1 to 23 (MWKIHNKLLIYILWIMEIRLVSS). Intrachain disulfides connect Cys65–Cys76, Cys115–Cys123, Cys125–Cys148, Cys196–Cys210, Cys198–Cys205, Cys281–Cys312, Cys297–Cys307, Cys311–Cys351, Cys327–Cys342, Cys329–Cys339, and Cys334–Cys335. N-linked (GlcNAc...) asparagine glycosylation is found at Asn75 and Asn119. The O-palmitoleoyl serine; by PORCN moiety is linked to residue Ser202.

It belongs to the Wnt family. In terms of processing, palmitoleoylated by porcupine. The lipid group functions as a sorting signal, targeting the ligand to polarized vesicles that transport Wnt2 to unique sites at the cell surface. Depalmitoleoylated by notum, leading to inhibit Wnt signaling pathway. In terms of tissue distribution, dynamic expression pattern during embryogenesis. Expression is predominantly segmented, with expression also seen in the limb primordia and presumptive gonads. In embryonic tracheal cells, expression is close to and dorsal to the tracheal placode.

The protein resides in the secreted. It localises to the extracellular space. Its subcellular location is the extracellular matrix. Binds as a ligand to a family of frizzled seven-transmembrane receptors and acts through a cascade of genes on the nucleus. Segment polarity protein. May function in gonadogenesis and limb development. Wg and Wnt2 have a role in the developing trachea and together are responsible for all dorsal trunk formation. In Drosophila melanogaster (Fruit fly), this protein is Protein Wnt-2 (Wnt2).